Reading from the N-terminus, the 541-residue chain is Chaperonin GroEL 2 (541 aa).

ATP is bound by residues 29-32 (TLGP), 86-90 (DGTTT), Gly-414, 478-480 (DAA), and Asp-494.

It belongs to the chaperonin (HSP60) family. Forms a cylinder of 14 subunits composed of two heptameric rings stacked back-to-back. Interacts with the co-chaperonin GroES.

The protein localises to the cytoplasm. The enzyme catalyses ATP + H2O + a folded polypeptide = ADP + phosphate + an unfolded polypeptide.. Its function is as follows. Together with its co-chaperonin GroES, plays an essential role in assisting protein folding. The GroEL-GroES system forms a nano-cage that allows encapsulation of the non-native substrate proteins and provides a physical environment optimized to promote and accelerate protein folding. The chain is Chaperonin GroEL 2 from Frankia casuarinae (strain DSM 45818 / CECT 9043 / HFP020203 / CcI3).